A 290-amino-acid polypeptide reads, in one-letter code: Cbb3-type cytochrome c oxidase subunit CcoP (290 aa).

The interval 1-22 (MSVKPTKQKPGEPPTTGHSWDG) is disordered. At 1–37 (MSVKPTKQKPGEPPTTGHSWDGIEEFDNPMPRWWLWT) the chain is on the cytoplasmic side. The helical transmembrane segment at 38 to 58 (FYVTIVWAIGYSILYPAWPLI) threads the bilayer. At 59–290 (NGATNGLIGH…VYVHGLGGGE (232 aa)) the chain is on the periplasmic side. Cytochrome c domains are found at residues 109–199 (YATN…LQIS) and 206–287 (ALSA…HGLG). Residues Cys-122, Cys-125, His-126, Met-174, Cys-219, Cys-222, His-223, and Met-264 each contribute to the heme c site.

It belongs to the CcoP / FixP family. Component of the cbb3-type cytochrome c oxidase at least composed of CcoN, CcoO, CcoQ and CcoP. Heme c is required as a cofactor.

Its subcellular location is the cell inner membrane. The protein operates within energy metabolism; oxidative phosphorylation. Functionally, C-type cytochrome. Part of the cbb3-type cytochrome c oxidase complex. CcoP subunit is required for transferring electrons from donor cytochrome c via its heme groups to CcoO subunit. From there, electrons are shuttled to the catalytic binuclear center of CcoN subunit where oxygen reduction takes place. The complex also functions as a proton pump. The protein is Cbb3-type cytochrome c oxidase subunit CcoP of Cereibacter sphaeroides (strain ATCC 17023 / DSM 158 / JCM 6121 / CCUG 31486 / LMG 2827 / NBRC 12203 / NCIMB 8253 / ATH 2.4.1.) (Rhodobacter sphaeroides).